We begin with the raw amino-acid sequence, 265 residues long: Homeobox protein Nkx-6.3 (265 aa).

Residues 139-198 (KKHTRPTFTGHQIFALEKTFEQTKYLAGPERARLAYSLGMTESQVKVWFQNRRTKWRKKS) constitute a DNA-binding region (homeobox). Residues 196 to 240 (KKSALEPSSSTPRAPGGAGAGAGGDRAPSENEDDEYNKPLDPDSD) are disordered.

It is found in the nucleus. Functionally, putative transcription factor, which may be involved in patterning of central nervous system and pancreas. This Homo sapiens (Human) protein is Homeobox protein Nkx-6.3 (NKX6-3).